Consider the following 421-residue polypeptide: MKARIESVQAMPIYDSRGVPTVRVRLTLTDGTAATASIPSGASTGENEAVELRDGDPKAHGGKGVLKAVSNVNDVIAPAVMGLEPWRQAEIDRLMIELDGTANKERLGANAILGVSEAVAAAAAKSAGLPLYAYLGGAGQARLPIPMINILNGGKHADSSLDFQEFMIMPVGAPSFAEAMRYATETFQALKSILKAKGHATSVGDEGGFAPQLQSNDEACDLIVEAITKAGYEPGEDIAIALDPAASSFHENGVYRLTRSGQGDKTSSEMTDLYRRWIDKYPIVSIEDGLAENDWDGFREHTAVLGEKIQIVGDDLLVTNTRFIQRAIEEKSCNAVLIKLNQIGTVTETVEAIHLCRKAGWGFVISHRSGETEDTFMADFAVAMGGGQIKTGSVCRSERMAKYNRLLEIESDLGKAARFGR.

Residue Gln-164 coordinates (2R)-2-phosphoglycerate. Glu-206 (proton donor) is an active-site residue. Mg(2+)-binding residues include Asp-243, Glu-287, and Asp-314. Lys-339, Arg-368, Ser-369, and Lys-390 together coordinate (2R)-2-phosphoglycerate. Lys-339 functions as the Proton acceptor in the catalytic mechanism.

The protein belongs to the enolase family. As to quaternary structure, component of the RNA degradosome, a multiprotein complex involved in RNA processing and mRNA degradation. Requires Mg(2+) as cofactor.

It is found in the cytoplasm. Its subcellular location is the secreted. The protein resides in the cell surface. The catalysed reaction is (2R)-2-phosphoglycerate = phosphoenolpyruvate + H2O. Its pathway is carbohydrate degradation; glycolysis; pyruvate from D-glyceraldehyde 3-phosphate: step 4/5. Catalyzes the reversible conversion of 2-phosphoglycerate (2-PG) into phosphoenolpyruvate (PEP). It is essential for the degradation of carbohydrates via glycolysis. The polypeptide is Enolase 1 (Methylococcus capsulatus (strain ATCC 33009 / NCIMB 11132 / Bath)).